The primary structure comprises 607 residues: DNA primase (607 aa).

Residues 39–63 (CPFHDDKNPSMSISSSKNIFKCWAC) form a CHC2-type zinc finger. Positions 267 to 350 (NQLFIVEGYF…IVEIVQWEHN (84 aa)) constitute a Toprim domain. Mg(2+) is bound by residues E273, D319, and D321.

It belongs to the DnaG primase family. In terms of assembly, monomer. Interacts with DnaB. Requires Zn(2+) as cofactor. It depends on Mg(2+) as a cofactor.

It catalyses the reaction ssDNA + n NTP = ssDNA/pppN(pN)n-1 hybrid + (n-1) diphosphate.. In terms of biological role, RNA polymerase that catalyzes the synthesis of short RNA molecules used as primers for DNA polymerase during DNA replication. This chain is DNA primase, found in Mycoplasma genitalium (strain ATCC 33530 / DSM 19775 / NCTC 10195 / G37) (Mycoplasmoides genitalium).